The primary structure comprises 35 residues: Photosystem II reaction center protein M (35 aa).

A helical transmembrane segment spans residues 5–25 (IFGLTATALFIIIPTSFLLIL).

It belongs to the PsbM family. As to quaternary structure, PSII is composed of 1 copy each of membrane proteins PsbA, PsbB, PsbC, PsbD, PsbE, PsbF, PsbH, PsbI, PsbJ, PsbK, PsbL, PsbM, PsbT, PsbX, PsbY, PsbZ, Psb30/Ycf12, at least 3 peripheral proteins of the oxygen-evolving complex and a large number of cofactors. It forms dimeric complexes.

Its subcellular location is the plastid. It localises to the chloroplast thylakoid membrane. Its function is as follows. One of the components of the core complex of photosystem II (PSII). PSII is a light-driven water:plastoquinone oxidoreductase that uses light energy to abstract electrons from H(2)O, generating O(2) and a proton gradient subsequently used for ATP formation. It consists of a core antenna complex that captures photons, and an electron transfer chain that converts photonic excitation into a charge separation. This subunit is found at the monomer-monomer interface. In Tetradesmus obliquus (Green alga), this protein is Photosystem II reaction center protein M.